The sequence spans 583 residues: Protein NRT1/ PTR FAMILY 5.1 (583 aa).

The helical transmembrane segment at W74–G94 threads the bilayer. T98 is subject to Phosphothreonine. The next 10 membrane-spanning stretches (helical) occupy residues F99–V119, A134–G154, F182–V202, W210–I230, V320–V340, I361–Y381, L405–K425, I446–G466, T485–I505, and Y529–A549.

The protein belongs to the major facilitator superfamily. Proton-dependent oligopeptide transporter (POT/PTR) (TC 2.A.17) family. As to expression, expressed in flowers. Detected in stems, leaves and siliques.

Its subcellular location is the membrane. In Arabidopsis thaliana (Mouse-ear cress), this protein is Protein NRT1/ PTR FAMILY 5.1 (NPF5.1).